The chain runs to 176 residues: Zinc finger protein 428 (176 aa).

Residues 1-152 form a disordered region; that stretch reads MTETREPTET…EEEGGTYHCT (152 aa). Acidic residues predominate over residues 16-46; that stretch reads LEEDDEDLSPEPDSEEEEEEEEEETTDDPEY. Phosphothreonine is present on threonine 96. A compositionally biased stretch (basic and acidic residues) spans 126–138; it reads PSRTGETRPAGRD. The C2H2-type zinc-finger motif lies at 149-171; it reads YHCTECEDSFDNLGELHGHFMLH.

This is Zinc finger protein 428 (Znf428) from Mus musculus (Mouse).